Consider the following 110-residue polypeptide: Large ribosomal subunit protein uL22 (110 aa).

The protein belongs to the universal ribosomal protein uL22 family. Part of the 50S ribosomal subunit.

Functionally, this protein binds specifically to 23S rRNA; its binding is stimulated by other ribosomal proteins, e.g. L4, L17, and L20. It is important during the early stages of 50S assembly. It makes multiple contacts with different domains of the 23S rRNA in the assembled 50S subunit and ribosome. The globular domain of the protein is located near the polypeptide exit tunnel on the outside of the subunit, while an extended beta-hairpin is found that lines the wall of the exit tunnel in the center of the 70S ribosome. The polypeptide is Large ribosomal subunit protein uL22 (Haemophilus ducreyi (strain 35000HP / ATCC 700724)).